Reading from the N-terminus, the 574-residue chain is Protein OBERON 2 (574 aa).

Polar residues-rich tracts occupy residues 1-10 and 65-76; these read MGTSSGSNHP and SMSQKTEPDSME. The tract at residues 1 to 76 is disordered; that stretch reads MGTSSGSNHP…SQKTEPDSME (76 aa). Residues 226-291 form a PHD-type zinc finger; the sequence is LCMCTICNKF…VFKCRACNRT (66 aa). A coiled-coil region spans residues 416-524; that stretch reads KKARMALETC…LFEKIKLQEN (109 aa).

Self-interacts. Interacts with OBE1, OBE3 and OBE4. Binds to VPg of pea seed borne mosaic virus (PSbMV), turnip mosaic virus (TuMV) and lettuce mosaic virus (LMV), but not with VPg of tobacco etch virus (TEV), cowpea mosaic virus (CPMV), tomato black ring virus (TBRV) and grapevine fan leaf virus (GFLV). In terms of tissue distribution, expressed in roots, seedlings, stems, leaves, flowers and siliques, especially in the vasculature.

The protein resides in the nucleus. Functionally, probable transcription factor that acts together with OBE1 for the maintenance and/or establishment of both the shoot and root meristems, probably by controlling the expression of the meristem genes such as WUS, PLT1 and PLT2 and of genes required for auxin responses. Promotes cell meristematic activity via the WUSCHEL-CLAVATA pathway. Involved in the development of the basal pole and in auxin-mediated root and vascular development in the embryo. Confers sensitivity to turnip mosaic virus (TuMV) probably by promoting viral movement and multiplication via interaction with TuMV VPg. The sequence is that of Protein OBERON 2 from Arabidopsis thaliana (Mouse-ear cress).